The chain runs to 155 residues: Endoribonuclease YbeY (155 aa).

The disordered stretch occupies residues 64–84 (SFPMDEMRAPGDDEDPPSGLL). Zn(2+) contacts are provided by His-115, His-119, and His-125.

This sequence belongs to the endoribonuclease YbeY family. Zn(2+) is required as a cofactor.

The protein localises to the cytoplasm. In terms of biological role, single strand-specific metallo-endoribonuclease involved in late-stage 70S ribosome quality control and in maturation of the 3' terminus of the 16S rRNA. The protein is Endoribonuclease YbeY of Cutibacterium acnes (strain DSM 16379 / KPA171202) (Propionibacterium acnes).